Consider the following 129-residue polypeptide: ATP synthase epsilon chain (129 aa).

This sequence belongs to the ATPase epsilon chain family. F-type ATPases have 2 components, CF(1) - the catalytic core - and CF(0) - the membrane proton channel. CF(1) has five subunits: alpha(3), beta(3), gamma(1), delta(1), epsilon(1). CF(0) has three main subunits: a, b and c.

Its subcellular location is the cell inner membrane. Produces ATP from ADP in the presence of a proton gradient across the membrane. In Campylobacter jejuni subsp. jejuni serotype O:2 (strain ATCC 700819 / NCTC 11168), this protein is ATP synthase epsilon chain.